A 221-amino-acid polypeptide reads, in one-letter code: Glutathione S-transferase (221 aa).

One can recognise a GST N-terminal domain in the interval 3–83 (GKPVLHYANT…YIAGKYNLYG (81 aa)). Glutathione-binding positions include Y9, K45, 54–55 (QV), and 67–68 (QT). The 124-residue stretch at 85–208 (DLKERALIDM…QPGSQRKPRL (124 aa)) folds into the GST C-terminal domain.

Belongs to the GST superfamily. Alpha family. As to quaternary structure, homodimer or heterodimer of GSTA1 and GSTA2.

It catalyses the reaction RX + glutathione = an S-substituted glutathione + a halide anion + H(+). The enzyme catalyses prostaglandin A2 + glutathione = prostaglandin A2-S-(R)-glutathione. It carries out the reaction prostaglandin J2 + glutathione = prostaglandin J2-S-(R)-glutathione. The catalysed reaction is (13S)-hydroperoxy-(9Z,11E)-octadecadienoate + 2 glutathione = (13S)-hydroxy-(9Z,11E)-octadecadienoate + glutathione disulfide + H2O. It catalyses the reaction androst-5-ene-3,17-dione = androst-4-ene-3,17-dione. Functionally, glutathione S-transferase that catalyzes the nucleophilic attack of the sulfur atom of glutathione on the electrophilic groups of a wide range of exogenous and endogenous compounds. Involved in the formation of glutathione conjugates of both prostaglandin A2 (PGA2) and prostaglandin J2 (PGJ2). It also catalyzes the isomerization of D5-androstene-3,17-dione (AD) into D4-androstene-3,17-dione and may therefore play an important role in hormone biosynthesis. Through its glutathione-dependent peroxidase activity toward the fatty acid hydroperoxide (13S)-hydroperoxy-(9Z,11E)-octadecadienoate/13-HPODE it is also involved in the metabolism of oxidized linoleic acid. The protein is Glutathione S-transferase of Gallus gallus (Chicken).